The primary structure comprises 466 residues: UDP-N-acetylmuramoylalanine--D-glutamate ligase (466 aa).

Position 122 to 128 (122 to 128) interacts with ATP; it reads GTNGKTT.

The protein belongs to the MurCDEF family.

The protein localises to the cytoplasm. The enzyme catalyses UDP-N-acetyl-alpha-D-muramoyl-L-alanine + D-glutamate + ATP = UDP-N-acetyl-alpha-D-muramoyl-L-alanyl-D-glutamate + ADP + phosphate + H(+). It functions in the pathway cell wall biogenesis; peptidoglycan biosynthesis. Functionally, cell wall formation. Catalyzes the addition of glutamate to the nucleotide precursor UDP-N-acetylmuramoyl-L-alanine (UMA). The polypeptide is UDP-N-acetylmuramoylalanine--D-glutamate ligase (Aromatoleum aromaticum (strain DSM 19018 / LMG 30748 / EbN1) (Azoarcus sp. (strain EbN1))).